Here is a 281-residue protein sequence, read N- to C-terminus: Sulfur carrier protein FdhD (281 aa).

Residue C117 is the Cysteine persulfide intermediate of the active site.

The protein belongs to the FdhD family.

The protein localises to the cytoplasm. Functionally, required for formate dehydrogenase (FDH) activity. Acts as a sulfur carrier protein that transfers sulfur from IscS to the molybdenum cofactor prior to its insertion into FDH. The protein is Sulfur carrier protein FdhD of Xanthomonas campestris pv. campestris (strain 8004).